The chain runs to 1193 residues: DNA-directed RNA polymerase subunit beta (1193 aa).

The tract at residues Gln1173–Glu1193 is disordered. Positions Glu1177–Glu1193 are enriched in basic and acidic residues.

Belongs to the RNA polymerase beta chain family. The RNAP catalytic core consists of 2 alpha, 1 beta, 1 beta' and 1 omega subunit. When a sigma factor is associated with the core the holoenzyme is formed, which can initiate transcription.

It catalyses the reaction RNA(n) + a ribonucleoside 5'-triphosphate = RNA(n+1) + diphosphate. DNA-dependent RNA polymerase catalyzes the transcription of DNA into RNA using the four ribonucleoside triphosphates as substrates. This is DNA-directed RNA polymerase subunit beta from Streptococcus thermophilus (strain CNRZ 1066).